A 346-amino-acid polypeptide reads, in one-letter code: Biotin synthase (346 aa).

The Radical SAM core domain occupies Arg38–Thr256. Cys53, Cys57, and Cys60 together coordinate [4Fe-4S] cluster. [2Fe-2S] cluster-binding residues include Cys97, Cys128, Cys188, and Arg260.

The protein belongs to the radical SAM superfamily. Biotin synthase family. Homodimer. It depends on [4Fe-4S] cluster as a cofactor. [2Fe-2S] cluster serves as cofactor.

The catalysed reaction is (4R,5S)-dethiobiotin + (sulfur carrier)-SH + 2 reduced [2Fe-2S]-[ferredoxin] + 2 S-adenosyl-L-methionine = (sulfur carrier)-H + biotin + 2 5'-deoxyadenosine + 2 L-methionine + 2 oxidized [2Fe-2S]-[ferredoxin]. Its pathway is cofactor biosynthesis; biotin biosynthesis; biotin from 7,8-diaminononanoate: step 2/2. In terms of biological role, catalyzes the conversion of dethiobiotin (DTB) to biotin by the insertion of a sulfur atom into dethiobiotin via a radical-based mechanism. The polypeptide is Biotin synthase (Shigella boydii serotype 18 (strain CDC 3083-94 / BS512)).